Here is a 235-residue protein sequence, read N- to C-terminus: Elongation factor Tu (235 aa).

Residues 1–125 (KNMITGAAQM…QVDEYIPAPE (125 aa)) form the tr-type G domain. 47–50 (NKQD) is a GTP binding site.

It belongs to the TRAFAC class translation factor GTPase superfamily. Classic translation factor GTPase family. EF-Tu/EF-1A subfamily. As to quaternary structure, monomer.

The protein resides in the cytoplasm. It carries out the reaction GTP + H2O = GDP + phosphate + H(+). GTP hydrolase that promotes the GTP-dependent binding of aminoacyl-tRNA to the A-site of ribosomes during protein biosynthesis. This chain is Elongation factor Tu (tufA), found in Leptolyngbya ectocarpi (Phormidium ectocarpi).